Reading from the N-terminus, the 353-residue chain is Guanine nucleotide-binding protein subunit beta-5 (353 aa).

WD repeat units follow at residues 61–100 (GHGN…KEHA), 103–142 (MPCT…NENM), 151–192 (MHTN…QSFH), 194–236 (HGAD…QAFE), 237–276 (THES…EVAI), 278–320 (SKES…RVSI), and 323–352 (GHEN…LRVW).

The protein belongs to the WD repeat G protein beta family. In terms of assembly, component of a complex composed of RGS9 (isoform RGS9-1), GNB5 and RGS9BP; within this complex, the presence of GNB5 stabilizes both itself and RGS9 and increases RGS9 GTPase-activating protein (GAP) activity. Interacts with RGS7, forming the RGS7-GNB5 complex; within this complex, the presence of GNB5 increases RGS7 GTPase-activating protein (GAP) activity. Interacts with GPR158; promotes the GTPase activator activity of the RGS7-GNB5 complex in absence of glycine, in contrast GTPase activator activity of the RGS7-GNB5 complex is inhibited in presence of glycine. Interacts with RGS6. In terms of tissue distribution, detected in brain.

It localises to the membrane. Its function is as follows. Enhances GTPase-activating protein (GAP) activity of regulator of G protein signaling (RGS) proteins, such as RGS7 and RGS9, hence involved in the termination of the signaling initiated by the G protein coupled receptors (GPCRs) by accelerating the GTP hydrolysis on the G-alpha subunits, thereby promoting their inactivation. Increases RGS7 GTPase-activating protein (GAP) activity, thereby regulating mood and cognition. Increases RGS9 GTPase-activating protein (GAP) activity, hence contributes to the deactivation of G protein signaling initiated by D(2) dopamine receptors. May play an important role in neuronal signaling, including in the parasympathetic, but not sympathetic, control of heart rate. This Rattus norvegicus (Rat) protein is Guanine nucleotide-binding protein subunit beta-5 (Gnb5).